We begin with the raw amino-acid sequence, 363 residues long: uncharacterized protein (363 aa).

Residues 1-20 (MKRAPLITGLLLISTSCAYA) form the signal peptide.

This sequence belongs to the fimbrial protein family.

The protein localises to the fimbrium. Its function is as follows. Part of the yraHIJK fimbrial operon. Could contribute to adhesion to various surfaces in specific environmental niches. Increases adhesion to eukaryotic T24 bladder epithelial cells in the absence of fim operon. This is an uncharacterized protein from Escherichia coli (strain K12).